A 238-amino-acid polypeptide reads, in one-letter code: NADH-quinone oxidoreductase subunit I (238 aa).

2 4Fe-4S ferredoxin-type domains span residues 81–111 and 123–152; these read LVPR…IEAG and VKFV…MDSG. [4Fe-4S] cluster is bound by residues cysteine 91, cysteine 94, cysteine 97, cysteine 101, cysteine 132, cysteine 135, cysteine 138, and cysteine 142.

It belongs to the complex I 23 kDa subunit family. As to quaternary structure, NDH-1 is composed of 14 different subunits. Subunits NuoA, H, J, K, L, M, N constitute the membrane sector of the complex. [4Fe-4S] cluster serves as cofactor.

Its subcellular location is the cell inner membrane. The enzyme catalyses a quinone + NADH + 5 H(+)(in) = a quinol + NAD(+) + 4 H(+)(out). Functionally, NDH-1 shuttles electrons from NADH, via FMN and iron-sulfur (Fe-S) centers, to quinones in the respiratory chain. The immediate electron acceptor for the enzyme in this species is believed to be ubiquinone. Couples the redox reaction to proton translocation (for every two electrons transferred, four hydrogen ions are translocated across the cytoplasmic membrane), and thus conserves the redox energy in a proton gradient. The chain is NADH-quinone oxidoreductase subunit I from Anaeromyxobacter sp. (strain Fw109-5).